We begin with the raw amino-acid sequence, 355 residues long: Neurogenic differentiation factor 1 (355 aa).

The segment at 1–93 (MTKSYSESGL…GPKKKKMTKA (93 aa)) is disordered. Residues 58-77 (DEEDEDEDLEEEDEEEEEDD) show a composition bias toward acidic residues. Basic residues predominate over residues 80–92 (PKRRGPKKKKMTK). Positions 86–92 (KKKKMTK) match the Nuclear localization signal motif. One can recognise a bHLH domain in the interval 100–152 (LRRMKANARERNRMHGLNAALDNLRKVVPCYSKTQKLSKIETLRLAKNYIWAL). Phosphoserine occurs at positions 161, 258, 265, and 273. Phosphoserine; by CaMK2 is present on S334.

Efficient DNA-binding requires dimerization with another bHLH protein. Heterodimer with TCF3/E47; the heterodimer is inhibited in presence of ID2, but not NR0B2, to E-box element. Interacts with EP300; the interaction is inhibited by NR0B2. Interacts with RREB1. Interacts with ATOH8. In terms of processing, phosphorylated. In islet cells, phosphorylated on Ser-273 upon glucose stimulation; which may be required for nuclear localization. In activated neurons, phosphorylated on Ser-334; which promotes dendritic growth. Phosphorylated by MAPK1; phosphorylation regulates heterodimerization and DNA-binding activities. Phosphorylation on Ser-265 and Ser-273 increases transactivation on the insulin promoter in glucose-stimulated insulinoma cells. In terms of tissue distribution, most abundant in pancreatic alpha- and beta-cells, less in brain and intestine.

It localises to the cytoplasm. Its subcellular location is the nucleus. Functionally, acts as a transcriptional activator: mediates transcriptional activation by binding to E box-containing promoter consensus core sequences 5'-CANNTG-3'. Associates with the p300/CBP transcription coactivator complex to stimulate transcription of the secretin gene as well as the gene encoding the cyclin-dependent kinase inhibitor CDKN1A. Contributes to the regulation of several cell differentiation pathways, like those that promote the formation of early retinal ganglion cells, inner ear sensory neurons, granule cells forming either the cerebellum or the dentate gyrus cell layer of the hippocampus, endocrine islet cells of the pancreas and enteroendocrine cells of the small intestine. Together with PAX6 or SIX3, is required for the regulation of amacrine cell fate specification. Also required for dendrite morphogenesis and maintenance in the cerebellar cortex. Associates with chromatin to enhancer regulatory elements in genes encoding key transcriptional regulators of neurogenesis. The chain is Neurogenic differentiation factor 1 (NEUROD1) from Mesocricetus auratus (Golden hamster).